Here is a 201-residue protein sequence, read N- to C-terminus: MALHDENVVWHSHPVTVAAREQLHGHRGVMLWFTGLSGSGKSTVAGALEEALHQRGVSTYLLDGDNVRHGLCRDLGFSDADRQENIRRVGEVASLMADAGLIVLTAFISPHRAERQLVKERVGHDRFIEIYVNTPLAICEQRDPKGLYKKARAGELRNFTGIDAIYEAPDSPQVHLNGEQLVTNLVSQLLDLLRRRDIIRS.

35–42 (GLSGSGKS) is a binding site for ATP. Catalysis depends on serine 109, which acts as the Phosphoserine intermediate.

This sequence belongs to the APS kinase family.

The enzyme catalyses adenosine 5'-phosphosulfate + ATP = 3'-phosphoadenylyl sulfate + ADP + H(+). The protein operates within sulfur metabolism; hydrogen sulfide biosynthesis; sulfite from sulfate: step 2/3. Functionally, catalyzes the synthesis of activated sulfate. The sequence is that of Adenylyl-sulfate kinase from Salmonella paratyphi A (strain AKU_12601).